The chain runs to 541 residues: Carotenoid-cleaving dioxygenase, mitochondrial (541 aa).

H188, H248, H319, and H535 together coordinate Fe cation.

Belongs to the carotenoid oxygenase family. It depends on Fe(2+) as a cofactor. In terms of tissue distribution, widely expressed. Detected in heart, spleen, lung, intestine, colon, stomach, kidney, bladder, and prostate. Highly expressed in liver and testis (at protein level).

It is found in the mitochondrion. It carries out the reaction all-trans-beta-carotene + O2 = beta-ionone + all-trans-10'-apo-beta-carotenal. The catalysed reaction is 5-cis-lycopene + O2 = 5-cis-10'-apo-lycopenal + (3E,5E)-6,10-dimethylundeca-3,5,9-trien-2-one. The enzyme catalyses 13-cis-lycopene + O2 = 13-cis-10'-apo-lycopenal + (3E,5E)-6,10-dimethylundeca-3,5,9-trien-2-one. It catalyses the reaction lutein + O2 = (3R,6R)-hydroxy-alpha-ionone + (3R)-3-hydroxy-10'-apo-beta-carotenal. It carries out the reaction lutein + O2 = (3R,6R)-3-hydroxy-10'-apo-alpha-carotenal + (3R)-hydroxy-beta-ionone. The catalysed reaction is all-trans-zeaxanthin + 2 O2 = 4,9-dimethyldodeca-2,4,6,8,10-pentaenedial + 2 (3R)-hydroxy-beta-ionone. The enzyme catalyses all-trans-zeaxanthin + O2 = (3R)-3-hydroxy-10'-apo-beta-carotenal + (3R)-hydroxy-beta-ionone. It catalyses the reaction beta-cryptoxanthin + O2 = all-trans-10'-apo-beta-carotenal + (3R)-hydroxy-beta-ionone. It carries out the reaction all-trans-10'-apo-beta-carotenal + O2 = beta-ionone + 4,9-dimethyldodeca-2,4,6,8,10-pentaenedial. The catalysed reaction is (3R)-3-hydroxy-10'-apo-beta-carotenal + O2 = 4,9-dimethyldodeca-2,4,6,8,10-pentaenedial + (3R)-hydroxy-beta-ionone. The enzyme catalyses (3R,6R)-3-hydroxy-10'-apo-alpha-carotenal + O2 = (3R,6R)-hydroxy-alpha-ionone + 4,9-dimethyldodeca-2,4,6,8,10-pentaenedial. In terms of biological role, broad specificity mitochondrial dioxygenase that mediates the asymmetric oxidative cleavage of carotenoids. Cleaves carotenes (pure hydrocarbon carotenoids) such as all-trans-beta-carotene and lycopene as well as xanthophylls (oxygenated carotenoids) such as zeaxanthin, lutein and beta-cryptoxanthin at both the 9,10 and the 9',10' carbon-carbon double bond. Through its function in carotenoids metabolism regulates oxidative stress and the production of important signaling molecules. This chain is Carotenoid-cleaving dioxygenase, mitochondrial, found in Mustela putorius furo (European domestic ferret).